The chain runs to 203 residues: Guanylate kinase (203 aa).

The Guanylate kinase-like domain occupies 5–184; the sequence is GMLIVLSGPS…AVQRIEKIIE (180 aa). 12-19 lines the ATP pocket; that stretch reads GPSGVGKG.

The protein belongs to the guanylate kinase family.

It localises to the cytoplasm. The catalysed reaction is GMP + ATP = GDP + ADP. Essential for recycling GMP and indirectly, cGMP. This Latilactobacillus sakei subsp. sakei (strain 23K) (Lactobacillus sakei subsp. sakei) protein is Guanylate kinase.